We begin with the raw amino-acid sequence, 700 residues long: UvrABC system protein C (700 aa).

A GIY-YIG domain is found at Thr11 to Ile90. One can recognise a UVR domain in the interval Thr200–Thr235.

This sequence belongs to the UvrC family. Interacts with UvrB in an incision complex.

The protein resides in the cytoplasm. Its function is as follows. The UvrABC repair system catalyzes the recognition and processing of DNA lesions. UvrC both incises the 5' and 3' sides of the lesion. The N-terminal half is responsible for the 3' incision and the C-terminal half is responsible for the 5' incision. In Oleidesulfovibrio alaskensis (strain ATCC BAA-1058 / DSM 17464 / G20) (Desulfovibrio alaskensis), this protein is UvrABC system protein C.